Here is a 476-residue protein sequence, read N- to C-terminus: Glutamate--tRNA ligase (476 aa).

A 'HIGH' region motif is present at residues 9-19; it reads PSPTGLFHIGT. A 'KMSKS' region motif is present at residues 248–252; the sequence is KLSKR. ATP is bound at residue lysine 251.

This sequence belongs to the class-I aminoacyl-tRNA synthetase family. Glutamate--tRNA ligase type 1 subfamily. Monomer.

The protein resides in the cytoplasm. It catalyses the reaction tRNA(Glu) + L-glutamate + ATP = L-glutamyl-tRNA(Glu) + AMP + diphosphate. Functionally, catalyzes the attachment of glutamate to tRNA(Glu) in a two-step reaction: glutamate is first activated by ATP to form Glu-AMP and then transferred to the acceptor end of tRNA(Glu). The chain is Glutamate--tRNA ligase from Prochlorococcus marinus (strain AS9601).